A 402-amino-acid chain; its full sequence is MSDGEEKPDGFSFAGIAAGLKDSNKKDLALILAPENSICSGLFTQSIVRASCVDICEQRIKKSSGLIRAILINSGQANACTGDYGIQHTLFATKEVSQLLGINEEEVLMCSTGVIGIPIQIKNLIDNLPNLVKELKTNSLQNAAEAILTTDLVDKKITIETFIEGRKVKISGFAKGSGMIYPNMATMLAFLTCDVGVDKEEWDKMISIAVKKSFNAISVDGETSTNDAFIGINSGKKIDKKFLSKIQSGIDIVCQSLAKNIARDGEGANCLLEVLVEGAKSNSDAIKIAKSICNSSLVKTAINGCDPNWGRIISAAGNSGIDFKLDFLDLYIGDFQILKKGKLNKYDSKKVANYMQTRMNGKYLVEDIVSISLHLNSGSEKGTAWGCDLSKKYVEINSEYTT.

Residues Thr149, Lys175, Thr186, Glu266, Asn397, and Thr402 each coordinate substrate. Thr186 functions as the Nucleophile in the catalytic mechanism.

Belongs to the ArgJ family. In terms of assembly, heterotetramer of two alpha and two beta chains.

It localises to the cytoplasm. The enzyme catalyses N(2)-acetyl-L-ornithine + L-glutamate = N-acetyl-L-glutamate + L-ornithine. It carries out the reaction L-glutamate + acetyl-CoA = N-acetyl-L-glutamate + CoA + H(+). It functions in the pathway amino-acid biosynthesis; L-arginine biosynthesis; L-ornithine and N-acetyl-L-glutamate from L-glutamate and N(2)-acetyl-L-ornithine (cyclic): step 1/1. Its pathway is amino-acid biosynthesis; L-arginine biosynthesis; N(2)-acetyl-L-ornithine from L-glutamate: step 1/4. In terms of biological role, catalyzes two activities which are involved in the cyclic version of arginine biosynthesis: the synthesis of N-acetylglutamate from glutamate and acetyl-CoA as the acetyl donor, and of ornithine by transacetylation between N(2)-acetylornithine and glutamate. In Prochlorococcus marinus subsp. pastoris (strain CCMP1986 / NIES-2087 / MED4), this protein is Arginine biosynthesis bifunctional protein ArgJ.